Reading from the N-terminus, the 644-residue chain is Major core protein OPG129 (644 aa).

A propeptide spanning residues 1–61 (MEAVVNSDVF…IVDDDFISAG (61 aa)) is cleaved from the precursor.

Belongs to the orthopoxvirus OPG129 family. In terms of processing, the 73-kDa precursor is cleaved to a mature protein of 60 kDa during virion maturation. Proteolytic cleavage of major core proteins OPG129, OPG136, and OPG098, which occurs at a late stage of core formation, is required for production of infectious mature virions (MV).

The protein localises to the virion. Functionally, major component of the virion core that undergoes proteolytic processing during the immature virion (IV) to mature virion (MV) transition. Essential for the formation of a structurally normal core. In Homo sapiens (Human), this protein is Major core protein OPG129 (OPG129).